The primary structure comprises 352 residues: Pejvakin (352 aa).

The protein belongs to the gasdermin family. As to quaternary structure, interacts with MAP1LC3B; interaction is direct. Interacts with IQGAP1. Interacts with ROCK2. Interacts with TRIOBP. In ear, it is detected in the organ of Corti and the spiral ganglion within the cochlea in the sensory areas of the vestibule (cristae ampullares of the semicircular ducts, and maculae of the saccule and utricle) and in the first 3 relays (cochlear nuclei, superior olivary complex and inferior colliculus) of the afferent auditory pathway. Detected in hair cells of the cochlea and vestibule but not in neurons. In the afferent auditory pathway, it is present in the cell bodies of neurons but not in fiber bundles such as the trapezoid body in the brainstem. Also detected in spiral ganglion cells, which form the auditory nerve and project to the cochlear nuclei in the brainstem. Also present in the cochlear nuclei, the superior olive and the inferior colliculus (at protein level). Expressed in all the adult organs tested: brain, eye, inner ear, heart, lung, kidney, liver, intestine, testis and weakly in skeletal muscle.

It localises to the peroxisome membrane. The protein resides in the cell projection. The protein localises to the cilium. Functionally, peroxisome-associated protein required to protect auditory hair cells against noise-induced damage. Acts by regulating noise-induced peroxisome proliferation in auditory hair cells and neurons, and promoting autophagic degradation of damaged peroxisomes (pexophagy). Noise overexposure increases reactive oxygen species (ROS) levels, causing oxidative damage to auditory hair cells and resulting in hearing loss. PJVK acts as a ROS sensor that recruits the autophagy machinery to trigger pexophagy of peroxisomes damaged by oxidative stress. In addition to pexophagy, also required to promote peroxisome proliferation in response to sound overstimulation. The chain is Pejvakin from Mus musculus (Mouse).